The sequence spans 296 residues: Small ribosomal subunit biogenesis GTPase RsgA (296 aa).

One can recognise a CP-type G domain in the interval 65–223; that stretch reads INRIGRPAVA…LADTPGFSSI (159 aa). Residues 114–117 and 166–174 each bind GTP; these read SKAD and GQSGAGKST. Zn(2+) is bound by residues C247, C252, H254, and C260.

It belongs to the TRAFAC class YlqF/YawG GTPase family. RsgA subfamily. As to quaternary structure, monomer. Associates with 30S ribosomal subunit, binds 16S rRNA. It depends on Zn(2+) as a cofactor.

The protein localises to the cytoplasm. Its function is as follows. One of several proteins that assist in the late maturation steps of the functional core of the 30S ribosomal subunit. Helps release RbfA from mature subunits. May play a role in the assembly of ribosomal proteins into the subunit. Circularly permuted GTPase that catalyzes slow GTP hydrolysis, GTPase activity is stimulated by the 30S ribosomal subunit. The polypeptide is Small ribosomal subunit biogenesis GTPase RsgA (Lactobacillus acidophilus (strain ATCC 700396 / NCK56 / N2 / NCFM)).